We begin with the raw amino-acid sequence, 286 residues long: Versiconal hemiacetal acetate esterase stcI (286 aa).

Residues 54-56 (HAG) carry the Involved in the stabilization of the negatively charged intermediate by the formation of the oxyanion hole motif. Active-site residues include serine 123, aspartate 226, and histidine 256.

It belongs to the 'GDXG' lipolytic enzyme family.

It catalyses the reaction (2S,3S)-versiconal hemiacetal acetate + H2O = (2S-3S)-versiconal hemiacetal + acetate + H(+). It carries out the reaction (3S)-versiconol acetate + H2O = (S)-versiconol + acetate + H(+). Its pathway is mycotoxin biosynthesis; sterigmatocystin biosynthesis. Its function is as follows. Esterase; part of the gene cluster that mediates the biosynthesis of sterigmatocystin (ST), a polyketide-derived furanocoumarin which is part of the most toxic and carcinogenic compounds among the known mycotoxins. The first step in the biosynthesis of sterigmatocystin is the production of hexanoate by the fatty acid synthase (FAS) units stcJ and stcK. The polyketide backbone is assembled by the non-reducing polyketide synthase stcA by condensation of the starter hexanoyl-CoA and 7 malonyl-CoA extender units followed by cyclization and release of norsolorinic acid. Norsolorinic acid is the first stable intermediate in the biosynthesis of sterigmatocystin and is converted into averantin (AVN) by the ketoreductase stcE which reduces the hexanoate ketone to an alcohol. Averantin is then oxidized into 5'-hydroxyaverantin (HAVN) by the cytochrome P450 monooxygenase stcF. 5'-hydroxyaverantin is further converted to 5'-oxyaverantin (OAVN) by the 5'-hydroxyaverantin dehydrogenase stcG. The next step is the conversion of OAVN into averufin (AVF) which is catalyzed by a yet to be identified enzyme. The cytochrome P450 monooxygenase stcB and the flavin-binding monooxygenase stcW are both required for the conversion of averufin to 1-hydroxyversicolorone. The esterase stcI probably catalyzes the formation of versiconal hemiacetal acetate from 1-hydroxyversicolorone. The oxydoreductase stcN then probably catalyzes the biosynthetic step from versiconal to versicolorin B (VERB). The next step is performed by the versicolorin B desaturase stcL to produce versicolorin A (VERA). The ketoreductase stcU and the cytochrome P450 monooxygenase stcS are involved in the conversion of versicolorin A to demethylsterigmatocystin. The Baeyer-Villiger oxidas stcQ and the reductase stcR might be involved in the biosynthetic step from versicolorin A to demethylsterigmatocystin. The final step in the biosynthesis of sterigmatocystin is the methylation of demethylsterigmatocystin catalyzed by the methyltransferase stcP. This is Versiconal hemiacetal acetate esterase stcI from Emericella nidulans (strain FGSC A4 / ATCC 38163 / CBS 112.46 / NRRL 194 / M139) (Aspergillus nidulans).